The sequence spans 513 residues: tRNA A64-2'-O-ribosylphosphate transferase (513 aa).

In terms of biological role, tRNA backbone modifying enzyme that mediates initiator/ elongator tRNA discrimination. This enzyme modifies exclusively the initiator tRNA in position 64 using 5'-phosphoribosyl-1'-pyrophosphate as the modification donor. Recognize the stem-loop IV region that is unique in eukaryotic cytoplasmic initiator tRNAs. The chain is tRNA A64-2'-O-ribosylphosphate transferase (RIT1) from Saccharomyces cerevisiae (strain ATCC 204508 / S288c) (Baker's yeast).